A 236-amino-acid chain; its full sequence is Transcriptional activator protein SolR (236 aa).

Residues valine 169–glycine 234 form the HTH luxR-type domain. The H-T-H motif DNA-binding region spans alanine 193–asparagine 212.

Belongs to the autoinducer-regulated transcriptional regulatory protein family.

The polypeptide is Transcriptional activator protein SolR (solR) (Ralstonia nicotianae (strain ATCC BAA-1114 / GMI1000) (Ralstonia solanacearum)).